Here is a 38-residue protein sequence, read N- to C-terminus: Large ribosomal subunit protein bL36 (38 aa).

The protein belongs to the bacterial ribosomal protein bL36 family.

The polypeptide is Large ribosomal subunit protein bL36 (Phytoplasma mali (strain AT)).